The primary structure comprises 424 residues: CinA-like protein (424 aa).

The protein belongs to the CinA family.

The sequence is that of CinA-like protein from Shewanella woodyi (strain ATCC 51908 / MS32).